Here is a 392-residue protein sequence, read N- to C-terminus: Multidrug resistance protein MdtL (392 aa).

A run of 12 helical transmembrane segments spans residues 4 to 24 (FLLC…MYLV), 38 to 58 (AQLH…MLFA), 70 to 90 (VAIV…QAHA), 95 to 115 (LVGR…AFAI), 131 to 151 (LLNG…HLIM), 158 to 178 (SLFY…VFIL), 209 to 229 (ILIT…SPVL), 246 to 266 (ALMA…LSLF), 270 to 290 (TLML…SLAT), 294 to 314 (LTLI…GVAM), 331 to 351 (VLGI…AIIG), and 357 to 377 (MLIG…LVVT).

It belongs to the major facilitator superfamily. DHA1 family. MdtL (TC 2.A.1.2.22) subfamily.

It localises to the cell inner membrane. The polypeptide is Multidrug resistance protein MdtL (Klebsiella pneumoniae (strain 342)).